A 348-amino-acid chain; its full sequence is Peptide-N(4)-(N-acetyl-beta-glucosaminyl)asparagine amidase (348 aa).

4 residues coordinate Zn(2+): Cys116, Cys119, Cys151, and Cys154. Cys177 functions as the Nucleophile in the catalytic mechanism. Active-site residues include His204 and Asp221. Glu224 contacts substrate. Residues 311–348 form a disordered region; that stretch reads PSATPTKEMQKLKISKTGNKGRISGSAEWKESRGENGK. Basic and acidic residues predominate over residues 338 to 348; the sequence is EWKESRGENGK.

The protein belongs to the transglutaminase-like superfamily. PNGase family. It depends on Zn(2+) as a cofactor.

It localises to the cytoplasm. The enzyme catalyses Hydrolysis of an N(4)-(acetyl-beta-D-glucosaminyl)asparagine residue in which the glucosamine residue may be further glycosylated, to yield a (substituted) N-acetyl-beta-D-glucosaminylamine and a peptide containing an aspartate residue.. Specifically deglycosylates the denatured form of N-linked glycoproteins in the cytoplasm and assists their proteasome-mediated degradation. Cleaves the beta-aspartyl-glucosamine (GlcNAc) of the glycan and the amide side chain of Asn, converting Asn to Asp. Prefers proteins containing high-mannose over those bearing complex type oligosaccharides. Can recognize misfolded proteins in the endoplasmic reticulum that are exported to the cytosol to be destroyed and deglycosylate them, while it has no activity toward native proteins. Deglycosylation is a prerequisite for subsequent proteasome-mediated degradation of some, but not all, misfolded glycoproteins. The protein is Peptide-N(4)-(N-acetyl-beta-glucosaminyl)asparagine amidase (PNG1) of Candida glabrata (strain ATCC 2001 / BCRC 20586 / JCM 3761 / NBRC 0622 / NRRL Y-65 / CBS 138) (Yeast).